The chain runs to 91 residues: Potassium channel toxin BmTXK-beta-2 (91 aa).

The first 19 residues, 1-19 (MQRNLVVLLFLGMVALSSC), serve as a signal peptide directing secretion. The propeptide occupies 20–27 (GLREKHFQ). In terms of domain architecture, BetaSPN-type CS-alpha/beta spans 54 to 91 (QFGCPAYQGYCDDHCQDIKKEEGFCHGFKCKCGIPMGF). Cystine bridges form between cysteine 57–cysteine 78, cysteine 64–cysteine 83, and cysteine 68–cysteine 85.

This sequence belongs to the long chain scorpion toxin family. Class 1 subfamily. In terms of tissue distribution, expressed by the venom gland.

It localises to the secreted. Its function is as follows. Inhibits voltage-gated potassium channel. This chain is Potassium channel toxin BmTXK-beta-2, found in Olivierus martensii (Manchurian scorpion).